The sequence spans 134 residues: Protein Turandot E (134 aa).

Positions M1 to C38 are cleaved as a signal peptide.

It belongs to the Turandot family.

The protein resides in the secreted. In terms of biological role, a humoral factor that may play a role in stress tolerance. In Drosophila sechellia (Fruit fly), this protein is Protein Turandot E.